The following is a 362-amino-acid chain: Chorismate synthase (362 aa).

Arg-47 contacts NADP(+). FMN is bound by residues 124–126, Gly-286, 301–305, and Arg-327; these read RSS and KPTAT.

It belongs to the chorismate synthase family. As to quaternary structure, homotetramer. FMNH2 serves as cofactor.

The enzyme catalyses 5-O-(1-carboxyvinyl)-3-phosphoshikimate = chorismate + phosphate. Its pathway is metabolic intermediate biosynthesis; chorismate biosynthesis; chorismate from D-erythrose 4-phosphate and phosphoenolpyruvate: step 7/7. Its function is as follows. Catalyzes the anti-1,4-elimination of the C-3 phosphate and the C-6 proR hydrogen from 5-enolpyruvylshikimate-3-phosphate (EPSP) to yield chorismate, which is the branch point compound that serves as the starting substrate for the three terminal pathways of aromatic amino acid biosynthesis. This reaction introduces a second double bond into the aromatic ring system. The polypeptide is Chorismate synthase (Rippkaea orientalis (strain PCC 8801 / RF-1) (Cyanothece sp. (strain PCC 8801))).